We begin with the raw amino-acid sequence, 637 residues long: Early transcription factor 70 kDa subunit (637 aa).

The Helicase ATP-binding domain maps to 32-185 (RTIIDENRSV…GHIIDLMSEE (154 aa)). 45–52 (HIMGSGKT) contributes to the ATP binding site. A DEXH box motif is present at residues 135 to 138 (DEAH). The Helicase C-terminal domain occupies 327–507 (KFKYFINRIQ…VLPFDIKKLL (181 aa)).

It belongs to the helicase family. VETF subfamily. In terms of assembly, heterodimer of a 70 kDa and a 82 kDa subunit. Part of the early transcription complex composed of ETF, RAP94/OPG109, and the DNA-directed RNA polymerase.

It is found in the virion. Functionally, acts with RNA polymerase to initiate transcription from early gene promoters. Is recruited by the RPO-associated protein of 94 kDa RAP94/OPG109 to form the early transcription complex, which also contains the core RNA polymerase. ETF heterodimer binds to early gene promoters. This Homo sapiens (Human) protein is Early transcription factor 70 kDa subunit (OPG118).